We begin with the raw amino-acid sequence, 383 residues long: Sphingosine kinase 1 (383 aa).

A DAGKc domain is found at proline 12–serine 159. Residues asparagine 22–arginine 24 and threonine 54–asparagine 58 each bind ATP. Substrate is bound at residue serine 79–glycine 82. The active-site Proton donor/acceptor is aspartate 81. ATP contacts are provided by residues glutamate 86 and glycine 111–glycine 113. 2 short sequence motifs (nuclear export signal) span residues leucine 147 to leucine 155 and arginine 161 to leucine 169. A substrate-binding site is contributed by aspartate 178. 2 residues coordinate ATP: arginine 185 and arginine 191. The residue at position 193 (threonine 193) is a Phosphothreonine. Residue serine 225 is modified to Phosphoserine. Aspartate 340–glutamate 342 contacts ATP. Positions glycine 363–isoleucine 383 are disordered. Basic and acidic residues predominate over residues aspartate 372–isoleucine 383.

In terms of assembly, interacts with ACY1. Binds to calmodulin. Interacts with SPHKAP. Interacts with CIB1, the interaction occurs in a calcium-dependent manner. Interacts with TRAF2. Interacts with EEF1A1; the interaction enhances SPHK1 kinase activity. Requires Mg(2+) as cofactor. Expressed in microglia (at protein level).

The protein resides in the cytoplasm. It localises to the nucleus. The protein localises to the cell membrane. It is found in the endosome membrane. Its subcellular location is the membrane. The protein resides in the clathrin-coated pit. It localises to the synapse. It catalyses the reaction a sphingoid base + ATP = a sphingoid 1-phosphate + ADP + H(+). It carries out the reaction L-seryl-[protein] + acetyl-CoA = O-acetyl-L-seryl-[protein] + CoA. The catalysed reaction is sphinganine + ATP = sphinganine 1-phosphate + ADP + H(+). The enzyme catalyses sphing-4-enine + ATP = sphing-4-enine 1-phosphate + ADP + H(+). It catalyses the reaction 1-O-hexadecyl-2-amino-sn-glycerol + ATP = 1-O-hexadecyl-2-desoxy-2-amino-sn-glycero-3-phosphate + ADP + H(+). With respect to regulation, acetyltransferase activity increases in presence of the kinase substrate, sphingosine. In Purkinje cells, kinase activity on sphingosine increases in presence of VEGFA. In neurons, kinase activity increases during the first 24h in presence of Amyloid-beta protein 42 to decrease after 96h. In terms of biological role, catalyzes the phosphorylation of sphingosine to form sphingosine 1-phosphate (SPP), a lipid mediator with both intra- and extracellular functions. Also acts on D-erythro-sphingosine and to a lesser extent sphinganine, but not other lipids, such as D,L-threo-dihydrosphingosine, N,N-dimethylsphingosine, diacylglycerol, ceramide, or phosphatidylinositol. In contrast to proapoptotic SPHK2, has a negative effect on intracellular ceramide levels, enhances cell growth and inhibits apoptosis. Involved in the regulation of inflammatory response and neuroinflammation. Via the product sphingosine 1-phosphate, stimulates TRAF2 E3 ubiquitin ligase activity, and promotes activation of NF-kappa-B in response to TNF signaling leading to IL17 secretion. In response to TNF and in parallel to NF-kappa-B activation, negatively regulates RANTES induction through p38 MAPK signaling pathway. Involved in endocytic membrane trafficking induced by sphingosine, recruited to dilate endosomes, also plays a role on later stages of endosomal maturation and membrane fusion independently of its kinase activity. In Purkinje cells, seems to be also involved in the regulation of autophagosome-lysosome fusion upon VEGFA. Functionally, has serine acetyltransferase activity on PTGS2/COX2 in an acetyl-CoA dependent manner. The acetyltransferase activity increases in presence of the kinase substrate, sphingosine. During neuroinflammation, through PTGS2 acetylation, promotes neuronal secretion of specialized preresolving mediators (SPMs), especially 15-R-lipoxin A4, which results in an increase of phagocytic microglia. The sequence is that of Sphingosine kinase 1 (Sphk1) from Rattus norvegicus (Rat).